The sequence spans 155 residues: MADLSSLKDLGTASEAAAPAHVRKVDSLGRSYATGKRKNAVARVWVKPGSGKIIVNGKEFADYFARPVLQMILRQPIVAAARDGQFDIVATVAGGGLSGQAGAVRHGLSKALTYFEPGLRSVLKKGGFLTRDSRVVERKKYGKAKARRSFQFSKR.

This sequence belongs to the universal ribosomal protein uS9 family.

This chain is Small ribosomal subunit protein uS9, found in Rhizobium etli (strain CIAT 652).